The chain runs to 544 residues: MPKQLYFNEDARRALKRGVDIVADAVKTTLGPRGRNVSIDKKFGAPTVTHDGVTVAKEIELKDPFENMGARLLVEVATKTNDVVGDGTTTATVLAQSIVNEGLKMVAAGANPMLIKRGLDKAVEAVVAELKSVAIPVRDRADIAHVAAISAADSEIGDLIAEVMEKVGKDGVITVEESKGIAFEKEYTEGMQIDRGYISPYFVTNPERMEAELEDPYILITDKKISSIQDILPVLEKALQVTKNLVIIAEDVDGEALATLVVNKLRGTINALAVKAPGFGDRRKAMLQDIAILTGGTLISEEIGRKLDSATVEDLGRARRVVSDKDNTTIIEGRGDERAIRARIEQIRAQIETTTSDFDREKLQERLAKLAGGVAVLKVGAATEPELKEKKHRVEDALSTARSAVEEGIVPGGGVALLNAIPALDRVQVTYEDEKYGVQILRRALEEPMRQLARNAGEDGAVIIDTVRRLQKEKNDKNIGYNVLTGEFGSMIEMGIIDPVKVTRSAVQNAVSIAGLLLTTEALIADIPEEKPATPTPGGGGMDF.

ATP-binding positions include 29-32 (TLGP), 86-90 (DGTTT), Gly-413, 482-484 (NVL), and Asp-498.

It belongs to the chaperonin (HSP60) family. Forms a cylinder of 14 subunits composed of two heptameric rings stacked back-to-back. Interacts with the co-chaperonin GroES.

Its subcellular location is the cytoplasm. The enzyme catalyses ATP + H2O + a folded polypeptide = ADP + phosphate + an unfolded polypeptide.. Its function is as follows. Together with its co-chaperonin GroES, plays an essential role in assisting protein folding. The GroEL-GroES system forms a nano-cage that allows encapsulation of the non-native substrate proteins and provides a physical environment optimized to promote and accelerate protein folding. The sequence is that of Chaperonin GroEL 2 from Roseiflexus sp. (strain RS-1).